We begin with the raw amino-acid sequence, 180 residues long: Chromosome-anchoring protein RacA (180 aa).

A DNA-binding region (H-T-H motif) is located at residues 5-25 (TPFIAKKLGVSPKAVVRIAQQ). Positions 89 to 151 (SHDFEQLTAQ…LEATLKKEEP (63 aa)) form a coiled coil.

Belongs to the RacA family.

The protein localises to the cytoplasm. Its function is as follows. Required for the formation of axial filaments and for anchoring the origin regions at the cell poles in sporulating cells, thus ensuring proper chromosome segregation in the prespore. Binds in a dispersed manner throughout the chromosome but preferentially to sites clustered in the origin portion of the chromosome, causing condensation of the chromosome and its remodeling into an elongated, anchored structure. The protein is Chromosome-anchoring protein RacA of Bacillus cereus (strain ATCC 10987 / NRS 248).